We begin with the raw amino-acid sequence, 133 residues long: Small ribosomal subunit protein uS8 (133 aa).

It belongs to the universal ribosomal protein uS8 family. In terms of assembly, part of the 30S ribosomal subunit. Contacts proteins S5 and S12.

Functionally, one of the primary rRNA binding proteins, it binds directly to 16S rRNA central domain where it helps coordinate assembly of the platform of the 30S subunit. The protein is Small ribosomal subunit protein uS8 of Amoebophilus asiaticus (strain 5a2).